The primary structure comprises 612 residues: Dihydroxy-acid dehydratase (612 aa).

Aspartate 81 serves as a coordination point for Mg(2+). Cysteine 122 contacts [2Fe-2S] cluster. Aspartate 123 and lysine 124 together coordinate Mg(2+). Lysine 124 carries the post-translational modification N6-carboxylysine. Cysteine 193 is a [2Fe-2S] cluster binding site. Residue glutamate 489 participates in Mg(2+) binding. Serine 515 acts as the Proton acceptor in catalysis.

The protein belongs to the IlvD/Edd family. As to quaternary structure, homodimer. The cofactor is [2Fe-2S] cluster. Requires Mg(2+) as cofactor.

It carries out the reaction (2R)-2,3-dihydroxy-3-methylbutanoate = 3-methyl-2-oxobutanoate + H2O. It catalyses the reaction (2R,3R)-2,3-dihydroxy-3-methylpentanoate = (S)-3-methyl-2-oxopentanoate + H2O. Its pathway is amino-acid biosynthesis; L-isoleucine biosynthesis; L-isoleucine from 2-oxobutanoate: step 3/4. It participates in amino-acid biosynthesis; L-valine biosynthesis; L-valine from pyruvate: step 3/4. Functionally, functions in the biosynthesis of branched-chain amino acids. Catalyzes the dehydration of (2R,3R)-2,3-dihydroxy-3-methylpentanoate (2,3-dihydroxy-3-methylvalerate) into 2-oxo-3-methylpentanoate (2-oxo-3-methylvalerate) and of (2R)-2,3-dihydroxy-3-methylbutanoate (2,3-dihydroxyisovalerate) into 2-oxo-3-methylbutanoate (2-oxoisovalerate), the penultimate precursor to L-isoleucine and L-valine, respectively. The chain is Dihydroxy-acid dehydratase from Teredinibacter turnerae (strain ATCC 39867 / T7901).